We begin with the raw amino-acid sequence, 507 residues long: Hippocampus abundant transcript-like protein 1 (507 aa).

The tract at residues 1 to 27 (MSTDGESPEEPRWKAVASPKASTMPEK) is disordered. The Extracellular segment spans residues 1–51 (MSTDGESPEEPRWKAVASPKASTMPEKRGSAQAASGSWLQGFGHPSVYHAA). The chain crosses the membrane as a helical span at residues 52–72 (FVIFLEFFAWGLLTTPMLTVL). Topologically, residues 73 to 84 (HETFPQHTFLMN) are cytoplasmic. A helical transmembrane segment spans residues 85–105 (GLIQGVKGLLSFLSAPLIGAL). Residues 106-113 (SDVWGRKP) are Extracellular-facing. Residues 114 to 134 (FLLGTVFFTCFPIPLMRINPW) traverse the membrane as a helical segment. The Cytoplasmic portion of the chain corresponds to 135–136 (WY). A helical membrane pass occupies residues 137-157 (FGMISVSGVFSVTFSVIFAYV). Residues 158 to 170 (ADFTQEHERSTAY) are Extracellular-facing. Residues 171-191 (GWVSATFAASLVSSPAIGTYL) form a helical membrane-spanning segment. The Cytoplasmic portion of the chain corresponds to 192–198 (SANYGDS). A helical membrane pass occupies residues 199–219 (LVVLVATLVALLDICFILIAV). Topologically, residues 220-257 (PESLSEKIRPASWGAQISWKQADPFASLKKVGKDSTVL) are extracellular. A helical membrane pass occupies residues 258–278 (LICITVFLSYLPEAGQYSSFF). Residues 279–283 (LYLRQ) lie on the Cytoplasmic side of the membrane. Residues 284-304 (VIGFGSVKIVAFIAMVGILSI) form a helical membrane-spanning segment. The Extracellular portion of the chain corresponds to 305–323 (VAQTVFLSKLMRSLGNKNT). A helical transmembrane segment spans residues 324–344 (VLLGLGFQMLQLAWYGFGSQA). Over 345–347 (WMM) the chain is Cytoplasmic. A helical membrane pass occupies residues 348 to 368 (WAAGTVAAMSSITFPAVSALI). Residues 369–389 (SRNAESDQQGVAQGIVTGIRG) are Extracellular-facing. A helical membrane pass occupies residues 390-410 (LCNGLGPALYGFIFYMFHVEL). Topologically, residues 411-430 (SELGPKLNSDDDPLQGAFIP) are cytoplasmic. A helical membrane pass occupies residues 431-451 (GPPFLFGACIVLMSFLVALFI). The Extracellular portion of the chain corresponds to 452 to 507 (PEYRKTSGVQKHNNSTSGSLSTPPERGSDEDIEPLLQDSSIWELSFEEPGNQCTEL). Polar residues predominate over residues 459 to 473 (GVQKHNNSTSGSLST). Residues 459-483 (GVQKHNNSTSGSLSTPPERGSDEDI) form a disordered region. N-linked (GlcNAc...) asparagine glycosylation is found at Asn-464 and Asn-465.

It belongs to the major facilitator superfamily.

It localises to the membrane. The protein is Hippocampus abundant transcript-like protein 1 of Mus musculus (Mouse).